The chain runs to 397 residues: Enoyl-[acyl-carrier-protein] reductase [NADH] (397 aa).

NAD(+) contacts are provided by residues 48-53 (GASTGY), 74-75 (FE), 111-112 (DA), and 139-140 (VA). A substrate-binding site is contributed by tyrosine 225. Residue tyrosine 235 is the Proton donor of the active site. Residues lysine 244 and 273 to 275 (VVT) each bind NAD(+).

The protein belongs to the TER reductase family. In terms of assembly, monomer.

The enzyme catalyses a 2,3-saturated acyl-[ACP] + NAD(+) = a (2E)-enoyl-[ACP] + NADH + H(+). Its pathway is lipid metabolism; fatty acid biosynthesis. Its function is as follows. Involved in the final reduction of the elongation cycle of fatty acid synthesis (FAS II). Catalyzes the reduction of a carbon-carbon double bond in an enoyl moiety that is covalently linked to an acyl carrier protein (ACP). The protein is Enoyl-[acyl-carrier-protein] reductase [NADH] of Burkholderia mallei (strain SAVP1).